We begin with the raw amino-acid sequence, 538 residues long: ATP synthase subunit beta, mitochondrial (538 aa).

215–222 contacts ATP; the sequence is GGAGVGKT.

This sequence belongs to the ATPase alpha/beta chains family. In terms of assembly, subunit of the F-type ATPase which has 2 components, CF(1) - the catalytic core - and CF(0) - the membrane proton channel. Interacts (via N-terminus) with lov-1 (via PLAT domain). In terms of tissue distribution, expressed in three categories of adult male sensory neurons: tail ray B neurons, HOB hook neuron and head cephalic (CEM) neurons.

It localises to the cell projection. The protein resides in the cilium. Its subcellular location is the mitochondrion. It is found in the mitochondrion inner membrane. It catalyses the reaction ATP + H2O + 4 H(+)(in) = ADP + phosphate + 5 H(+)(out). Functionally, mitochondrial membrane ATP synthase (F(1)F(0) ATP synthase or Complex V) produces ATP from ADP in the presence of a proton gradient across the membrane which is generated by electron transport complexes of the respiratory chain. F-type ATPases consist of two structural domains, F(1) - containing the extramembraneous catalytic core, and F(0) - containing the membrane proton channel, linked together by a central stalk and a peripheral stalk. During catalysis, ATP synthesis in the catalytic domain of F(1) is coupled via a rotary mechanism of the central stalk subunits to proton translocation. Subunits alpha and beta form the catalytic core in F(1). Rotation of the central stalk against the surrounding subunits leads to hydrolysis of ATP in three separate catalytic sites on the beta subunits. Required during male mating behavior for the response to hermaphrodite contact, acting with lov-1 and pkd-2. May be involved in polycystin signaling. This Caenorhabditis elegans protein is ATP synthase subunit beta, mitochondrial.